The following is a 361-amino-acid chain: Velvet complex subunit B (361 aa).

Disordered stretches follow at residues M1–Q36 and N308–R340. Residues P23–R35 show a composition bias toward polar residues. One can recognise a Velvet domain in the interval Q47–S353. A compositionally biased stretch (low complexity) spans S323 to P336.

It belongs to the velvet family. VelB subfamily. As to quaternary structure, component of the heterotrimeric velvet complex composed of laeA, veA and velB; VeA acting as a bridging protein between laeA and velB. Interacts with velA. Forms a heterodimeric complex with vosA; the formation of the velB-vosA complex is light-dependent. Interacts with vosA.

The protein localises to the nucleus. Its subcellular location is the cytoplasm. Functionally, component of the velvet transcription factor complex that controls sexual/asexual developmental ratio in response to light, promoting sexual development in the darkness while stimulating asexual sporulation under illumination. The velvet complex acts as a global regulator for secondary metabolite gene expression. Component of the velB-VosA heterodimeric complex that plays a dual role in activating genes associated with spore maturation and repressing certain development-associated genes. The velB-VosA complex binds DNA through the DNA-binding domain of vosA that recognizes an 11-nucleotide consensus sequence 5'-CTGGCCGCGGC-3' consisting of two motifs in the promoters of key developmental regulatory genes. Controls conidiophore formation. This Penicillium rubens (strain ATCC 28089 / DSM 1075 / NRRL 1951 / Wisconsin 54-1255) (Penicillium chrysogenum) protein is Velvet complex subunit B.